The primary structure comprises 912 residues: Protein SLFN14 (912 aa).

Residues 206 to 391 are required for endoribonuclease activity; that stretch reads ESTHVEFKRF…KVHKFKEALQ (186 aa). Residues 392–571 are required for ribosome binding; the sequence is RHLFPVTQEE…QMGCEFFNLL (180 aa). 593-600 contacts ATP; sequence CFPGVRKT.

Belongs to the Schlafen family. Subgroup III subfamily. Associates with ribosomes in an ATP-independent manner. It depends on Mg(2+) as a cofactor. Mn(2+) serves as cofactor. In terms of tissue distribution, expressed in megakaryocytes and platelets (at protein level). Weakly expressed in melanocytes and malignant melanoma cells.

It localises to the nucleus. Functionally, shows no ribosome-associated and endoribonuclease activities. In terms of biological role, displays polysome-associated endoribonuclease activity towards mRNAs and rRNAs. May play a role in RNA surveillance pathways by recognizing stalled ribosomes and triggering endonucleolytic cleavage of aberrant mRNAs. Cleaves different types of rRNAs and mRNAs in a magnesium- and manganese-dependent and ATP-independent manner. Involved in correct maturation of megakaryocytes and especially important for proplatelet extension. The chain is Protein SLFN14 from Homo sapiens (Human).